A 430-amino-acid polypeptide reads, in one-letter code: Asparagine--tRNA ligase (430 aa).

This sequence belongs to the class-II aminoacyl-tRNA synthetase family. As to quaternary structure, homodimer.

The protein localises to the cytoplasm. The enzyme catalyses tRNA(Asn) + L-asparagine + ATP = L-asparaginyl-tRNA(Asn) + AMP + diphosphate + H(+). The chain is Asparagine--tRNA ligase from Staphylococcus aureus (strain JH1).